We begin with the raw amino-acid sequence, 592 residues long: 2-succinyl-5-enolpyruvyl-6-hydroxy-3-cyclohexene-1-carboxylate synthase (592 aa).

It belongs to the TPP enzyme family. MenD subfamily. In terms of assembly, homodimer. Requires Mg(2+) as cofactor. It depends on Mn(2+) as a cofactor. Thiamine diphosphate serves as cofactor.

The catalysed reaction is isochorismate + 2-oxoglutarate + H(+) = 5-enolpyruvoyl-6-hydroxy-2-succinyl-cyclohex-3-ene-1-carboxylate + CO2. Its pathway is quinol/quinone metabolism; 1,4-dihydroxy-2-naphthoate biosynthesis; 1,4-dihydroxy-2-naphthoate from chorismate: step 2/7. It participates in quinol/quinone metabolism; menaquinone biosynthesis. Its function is as follows. Catalyzes the thiamine diphosphate-dependent decarboxylation of 2-oxoglutarate and the subsequent addition of the resulting succinic semialdehyde-thiamine pyrophosphate anion to isochorismate to yield 2-succinyl-5-enolpyruvyl-6-hydroxy-3-cyclohexene-1-carboxylate (SEPHCHC). This Haloarcula marismortui (strain ATCC 43049 / DSM 3752 / JCM 8966 / VKM B-1809) (Halobacterium marismortui) protein is 2-succinyl-5-enolpyruvyl-6-hydroxy-3-cyclohexene-1-carboxylate synthase.